The chain runs to 384 residues: S-adenosylmethionine synthase (384 aa).

H15 contacts ATP. Residue D17 coordinates Mg(2+). E43 provides a ligand contact to K(+). E56 and Q99 together coordinate L-methionine. A flexible loop region spans residues 99 to 109 (QSSDINQGVDR). ATP contacts are provided by residues 164-166 (DAK), 230-231 (RF), D239, 245-246 (RK), A262, and K266. D239 lines the L-methionine pocket. K270 provides a ligand contact to L-methionine.

Belongs to the AdoMet synthase family. As to quaternary structure, homotetramer; dimer of dimers. Mg(2+) is required as a cofactor. It depends on K(+) as a cofactor.

The protein localises to the cytoplasm. It catalyses the reaction L-methionine + ATP + H2O = S-adenosyl-L-methionine + phosphate + diphosphate. Its pathway is amino-acid biosynthesis; S-adenosyl-L-methionine biosynthesis; S-adenosyl-L-methionine from L-methionine: step 1/1. Functionally, catalyzes the formation of S-adenosylmethionine (AdoMet) from methionine and ATP. The overall synthetic reaction is composed of two sequential steps, AdoMet formation and the subsequent tripolyphosphate hydrolysis which occurs prior to release of AdoMet from the enzyme. The polypeptide is S-adenosylmethionine synthase (Pasteurella multocida (strain Pm70)).